The primary structure comprises 840 residues: Urease (840 aa).

Residues 402 to 840 (GAIDCHVHYI…VPLSRNYFLF (439 aa)) form the Urease domain. Residues H407, H409, and K490 each coordinate Ni(2+). K490 carries the N6-carboxylysine modification. H492 contributes to the substrate binding site. Ni(2+) contacts are provided by H519 and H545. H593 functions as the Proton donor in the catalytic mechanism. D633 is a Ni(2+) binding site.

It in the C-terminal section; belongs to the metallo-dependent hydrolases superfamily. Urease alpha subunit family. As to quaternary structure, homohexamer. Other oligomeric forms may exist depending on pH and presence of salts. It depends on Ni cation as a cofactor. Carboxylation allows a single lysine to coordinate two nickel ions.

The catalysed reaction is urea + 2 H2O + H(+) = hydrogencarbonate + 2 NH4(+). It participates in nitrogen metabolism; urea degradation; CO(2) and NH(3) from urea (urease route): step 1/1. P-hydroxymercuribenzoate irreversibly abolishes ureolytic activity, but does not inhibit the ability to activate platelets. Also inhibited by acetohydroxamic acid (AHA), a chelator of Ni2+ and Zn2+ ions. In terms of biological role, urea hydrolase involved in nitrogen recycling from ureide, purine, and arginine catabolism. Is known to be highly toxic and lethal when given by intravenous route, producing convulsions and other signs of central nervous system intoxication associated with the high levels of ammonia formed in the blood of mice and rabbits. Is neurotoxic in mammals, when directly injected into hippocampus. It may induce seizures by acting at a neuronal network level, thereby disturbing electroencephalographic rhythms and causing metabolic alterations in key areas related to epileptogenesis and to neurogenic pulmonary edema. It increases calcium influx and neuronal firing rate in the hippocampus. Is able to insert itself into lipid bilayers, altering physicochemical properties of artificial membranes, and forming cation-selective ion channels. In vitro, has the ability to induce platelet aggregation, platelet granules secretion and release of ATP. In contrast to canatoxin, another urease from C.ensiformis, is not lethal to mice when intraperitoneally injected. The chain is Urease from Canavalia ensiformis (Jack bean).